The primary structure comprises 923 residues: Lysosomal acid alpha-glucosidase (923 aa).

The first 17 residues, 1-17 (MKHQVLLPLLVTTAIIA), serve as a signal peptide directing secretion. The propeptide occupies 18-36 (GSVGVYTHSKPLLGQSQDQ). N-linked (GlcNAc...) asparagine glycans are attached at residues N65, N405, and N440. Catalysis depends on D455, which acts as the Nucleophile. Residue E458 is part of the active site. D585 (proton donor) is an active-site residue. N586, N621, N646, N848, N908, and N912 each carry an N-linked (GlcNAc...) asparagine glycan.

Belongs to the glycosyl hydrolase 31 family.

Its subcellular location is the lysosome. The protein localises to the secreted. The enzyme catalyses Hydrolysis of terminal, non-reducing (1-&gt;4)-linked alpha-D-glucose residues with release of alpha-D-glucose.. Essential for the degradation of glycogen to glucose in lysosomes. Has both alpha-1,4 and alpha-1,6-glucosidase activity. This Tetrahymena pyriformis protein is Lysosomal acid alpha-glucosidase.